The primary structure comprises 419 residues: 3-isopropylmalate dehydratase large subunit (419 aa).

[4Fe-4S] cluster is bound by residues cysteine 300, cysteine 360, and cysteine 363.

This sequence belongs to the aconitase/IPM isomerase family. LeuC type 2 subfamily. In terms of assembly, heterodimer of LeuC and LeuD. The cofactor is [4Fe-4S] cluster.

It catalyses the reaction (2R,3S)-3-isopropylmalate = (2S)-2-isopropylmalate. The protein operates within amino-acid biosynthesis; L-leucine biosynthesis; L-leucine from 3-methyl-2-oxobutanoate: step 2/4. Its function is as follows. Catalyzes the isomerization between 2-isopropylmalate and 3-isopropylmalate, via the formation of 2-isopropylmaleate. This chain is 3-isopropylmalate dehydratase large subunit, found in Desulfatibacillum aliphaticivorans.